The chain runs to 331 residues: 6-phosphogluconolactonase (331 aa).

The protein belongs to the cycloisomerase 2 family.

It catalyses the reaction 6-phospho-D-glucono-1,5-lactone + H2O = 6-phospho-D-gluconate + H(+). It participates in carbohydrate degradation; pentose phosphate pathway; D-ribulose 5-phosphate from D-glucose 6-phosphate (oxidative stage): step 2/3. In terms of biological role, catalyzes the hydrolysis of 6-phosphogluconolactone to 6-phosphogluconate. The polypeptide is 6-phosphogluconolactonase (Salmonella agona (strain SL483)).